The primary structure comprises 353 residues: Protein Wnt-11b-1 (353 aa).

An N-terminal signal peptide occupies residues 1–22 (MAQIHHCVTLLLILCCSGLCGA). 3 N-linked (GlcNAc...) asparagine glycosylation sites follow: Asn31, Asn38, and Asn88. 5 cysteine pairs are disulfide-bonded: Cys78–Cys89, Cys128–Cys136, Cys138–Cys155, Cys208–Cys222, and Cys210–Cys217. Ser214 is lipidated: O-palmitoleoyl serine; by PORCN. Sulfotyrosine is present on residues Tyr274 and Tyr281. Cystine bridges form between Cys282–Cys313, Cys298–Cys308, Cys312–Cys352, Cys328–Cys343, Cys330–Cys340, and Cys335–Cys336. Asn299 is a glycosylation site (N-linked (GlcNAc...) asparagine).

It belongs to the Wnt family. In terms of assembly, homodimer. Secreted homodimers form a complex with wnt5a homodimers; tyrosine sulfation of both wnt11 and wnt5a by tpst1 is required for this interaction. Interacts with the transmembrane receptor fzd7/fz7. Interacts with lrp6 and ryk. Interacts with tdgf1/frl1. Interacts weakly with frzb1 and strongly with frzb2/crescent. Interaction with frzb2/crescent antagonizes wnt11 function in the neuroectoderm, but enhances it in mesodermal tissue. Post-translationally, glycosylation is required for protein secretion. In terms of processing, palmitoleoylation is required for efficient binding to frizzled receptors. Depalmitoleoylation leads to Wnt signaling pathway inhibition.

Its subcellular location is the secreted. It localises to the extracellular space. The protein localises to the extracellular matrix. Functionally, ligand for the frizzled7 transmembrane receptor. Primarily acts via non-canonical Wnt pathways mediated by either Ca(2+) and PKC, or by JNK and dvl2/dsh. Depending on the cellular context, can also signal via the canonical Wnt pathway mediated by beta-catenin and dvl2/dsh. May also inhibit canonical Wnt signaling. Maternally initiates dorsal/ventral axis formation by a canonical route, which signals via lrp6. In a complex with wnt5a, activates the canonical and non-canonical processes involved in axis formation. In the non-canonical pathway, acts through fzd7/fz7 to induce phosphorylation of dvl2/dsh. Signals through a non-canonical Wnt pathway to regulate convergent extension movements during gastrulation. Interactions with the secreted Wnt antagonist sfrp5 to coordinate foregut development, acting via a non-canonical wnt pathway whereby sfrp5 restricts wnt11b activity to prevent inappropriate foregut formation. Mediates cardiogenesis via non-canonical Wnt signaling involving JNK-activation and PKC. Acts redundantly with wnt11/wnt11r during pronephros induction. The polypeptide is Protein Wnt-11b-1 (Xenopus tropicalis (Western clawed frog)).